The chain runs to 602 residues: Potassium-transporting ATPase potassium-binding subunit (602 aa).

Helical transmembrane passes span 3–23 (ANNL…AVPV), 64–84 (QYAL…YALL), 135–155 (GLTV…LALI), 178–198 (LYVL…QGVI), 282–302 (FSNF…CLVF), 313–333 (VAVL…ETSA), 418–438 (GLYG…LMIG), 456–476 (VSIV…IAVL), 522–542 (WMTA…VLAI), and 565–585 (LFVV…YMPA).

The protein belongs to the KdpA family. As to quaternary structure, the system is composed of three essential subunits: KdpA, KdpB and KdpC.

The protein localises to the cell inner membrane. Functionally, part of the high-affinity ATP-driven potassium transport (or Kdp) system, which catalyzes the hydrolysis of ATP coupled with the electrogenic transport of potassium into the cytoplasm. This subunit binds the periplasmic potassium ions and delivers the ions to the membrane domain of KdpB through an intramembrane tunnel. The chain is Potassium-transporting ATPase potassium-binding subunit from Burkholderia pseudomallei (strain K96243).